The following is a 77-amino-acid chain: Conotoxin Vc6.14 (77 aa).

An N-terminal signal peptide occupies residues 1–19; sequence MEKLTILLLVAAVLMSTQA. A propeptide spanning residues 20-37 is cleaved from the precursor; the sequence is MFQGGGEKRPKDKIKFLS. 3 disulfides stabilise this stretch: C51-C65, C58-C69, and C64-C74.

This sequence belongs to the conotoxin O2 superfamily. Expressed by the venom duct.

It localises to the secreted. Its function is as follows. Inhibits voltage-gated ion channels. The protein is Conotoxin Vc6.14 of Conus victoriae (Queen Victoria cone).